Consider the following 128-residue polypeptide: Small ribosomal subunit protein uS14m (128 aa).

It belongs to the universal ribosomal protein uS14 family. In terms of assembly, component of the mitochondrial ribosome small subunit (28S) which comprises a 12S rRNA and about 30 distinct proteins. Interacts with LIAT1.

It is found in the mitochondrion. The chain is Small ribosomal subunit protein uS14m (Mrps14) from Mus musculus (Mouse).